Consider the following 200-residue polypeptide: uncharacterized protein (200 aa).

It belongs to the HAD-like hydrolase superfamily. CbbY/CbbZ/Gph/YieH family.

This is an uncharacterized protein from Haemophilus influenzae (strain ATCC 51907 / DSM 11121 / KW20 / Rd).